Here is a 501-residue protein sequence, read N- to C-terminus: Lysine--tRNA ligase (501 aa).

Mg(2+) is bound by residues glutamate 402 and glutamate 409.

Belongs to the class-II aminoacyl-tRNA synthetase family. As to quaternary structure, homodimer. It depends on Mg(2+) as a cofactor.

The protein localises to the cytoplasm. The catalysed reaction is tRNA(Lys) + L-lysine + ATP = L-lysyl-tRNA(Lys) + AMP + diphosphate. In Helicobacter pylori (strain G27), this protein is Lysine--tRNA ligase.